A 587-amino-acid polypeptide reads, in one-letter code: Glutathione hydrolase proenzyme (587 aa).

The first 28 residues, 1-28, serve as a signal peptide directing secretion; it reads MKRTWNVCLTALLSVLLVAGSVPFHAEA. The propeptide occupies 29–35; the sequence is KKPPKSY. Arg113 serves as a coordination point for L-glutamate. The active-site Nucleophile is the Thr403. L-glutamate is bound by residues Thr421, Glu423, Glu442, Asp445, 464-465, and 485-486; these read SS and GG.

It belongs to the gamma-glutamyltransferase family. As to quaternary structure, this enzyme consists of two polypeptide chains, which are synthesized in precursor form from a single polypeptide. In terms of processing, cleaved by autocatalysis into a large and a small subunit.

It localises to the secreted. The catalysed reaction is an N-terminal (5-L-glutamyl)-[peptide] + an alpha-amino acid = 5-L-glutamyl amino acid + an N-terminal L-alpha-aminoacyl-[peptide]. It catalyses the reaction glutathione + H2O = L-cysteinylglycine + L-glutamate. It carries out the reaction an S-substituted glutathione + H2O = an S-substituted L-cysteinylglycine + L-glutamate. It functions in the pathway sulfur metabolism; glutathione metabolism. Functionally, cleaves the gamma-glutamyl bond of extracellular glutathione (gamma-Glu-Cys-Gly), glutathione conjugates, and other gamma-glutamyl compounds. The metabolism of glutathione releases free glutamate and the dipeptide cysteinyl-glycine, which is hydrolyzed to cysteine and glycine by dipeptidases. The protein is Glutathione hydrolase proenzyme (ggt) of Bacillus subtilis (strain 168).